Reading from the N-terminus, the 142-residue chain is Small heat shock protein IbpB (142 aa).

One can recognise a sHSP domain in the interval 26–137 (AGESQSFPPY…APQRIAISER (112 aa)).

This sequence belongs to the small heat shock protein (HSP20) family. In terms of assembly, homodimer. Forms homomultimers of about 100-150 subunits at optimal growth temperatures. Conformation changes to oligomers at high temperatures or high ionic concentrations. The decrease in size of the multimers is accompanied by an increase in chaperone activity.

It localises to the cytoplasm. Functionally, associates with aggregated proteins, together with IbpA, to stabilize and protect them from irreversible denaturation and extensive proteolysis during heat shock and oxidative stress. Aggregated proteins bound to the IbpAB complex are more efficiently refolded and reactivated by the ATP-dependent chaperone systems ClpB and DnaK/DnaJ/GrpE. Its activity is ATP-independent. The sequence is that of Small heat shock protein IbpB from Klebsiella pneumoniae (strain 342).